The following is a 528-amino-acid chain: MLGLVGRVVAASASGALRGLSPSAPLPQAQLLLRAAPAALQPARDYAAQASPSPKAGATTGRIVAVIGAVVDVQFDEGLPPILNALEVQGRETRLVLEVAQHLGESTVRTIAMDGTEGLVRGQKVLDSGAPIRIPVGPETLGRIMNVIGEPIDERGPIKTKQFAAIHAEAPEFVEMSVEQEILVTGIKVVDLLAPYAKGGKIGLFGGAGVGKTVLIMELINNVAKAHGGYSVFAGVGERTREGNDLYHEMIESGVINLKDATSKVALVYGQMNEPPGARARVALTGLTVAEYFRDQEGQDVLLFIDNIFRFTQAGSEVSALLGRIPSAVGYQPTLATDMGTMQERITTTKKGSITSVQAIYVPADDLTDPAPATTFAHLDATTVLSRAIAELGIYPAVDPLDSTSRIMDPNIVGSEHYDVARGVQKILQDYKSLQDIIAILGMDELSEEDKLTVSRARKIQRFLSQPFQVAEVFTGHLGKLVPLKETIKGFQQILAGEYDHLPEQAFYMVGPIEEAVAKADKLAEEHS.

The N-terminal 46 residues, 1–46 (MLGLVGRVVAASASGALRGLSPSAPLPQAQLLLRAAPAALQPARDY), are a transit peptide targeting the mitochondrion. Ser-106 carries an O-linked (GlcNAc) serine glycan. An N6-acetyllysine; alternate mark is found at Lys-124 and Lys-161. An N6-succinyllysine; alternate mark is found at Lys-124 and Lys-161. At Lys-198 the chain carries N6-acetyllysine. The ADP site is built by Gly-209, Val-210, Gly-211, Lys-212, Thr-213, and Val-214. Residue Gly-209 participates in ATP binding. Residues Gly-209, Val-210, Gly-211, Lys-212, and Thr-213 each contribute to the phosphate site. Gly-211, Lys-212, Thr-213, and Val-214 together coordinate ATP. A Mg(2+)-binding site is contributed by Thr-213. Glu-238 serves as a coordination point for Mg(2+). Arg-239 serves as a coordination point for ATP. 2 positions are modified to N6-acetyllysine; alternate: Lys-259 and Lys-264. Lys-259 and Lys-264 each carry N6-succinyllysine; alternate. Thr-312 is subject to Phosphothreonine. Phosphoserine is present on Ser-415. Position 426 is an N6-acetyllysine (Lys-426). Ser-433 is modified (phosphoserine). 2 positions are modified to N6-acetyllysine: Lys-480 and Lys-485. Position 522 is an N6-acetyllysine; alternate (Lys-522). Position 522 is an N6-succinyllysine; alternate (Lys-522).

Belongs to the ATPase alpha/beta chains family. Homotrimer. Component of the ATP synthase complex composed at least of ATP5F1A/subunit alpha, ATP5F1B/subunit beta, ATP5MC1/subunit c (homooctomer), MT-ATP6/subunit a, MT-ATP8/subunit 8, ATP5ME/subunit e, ATP5MF/subunit f, ATP5MG/subunit g, ATP5MK/subunit k, ATP5MJ/subunit j, ATP5F1C/subunit gamma, ATP5F1D/subunit delta, ATP5F1E/subunit epsilon, ATP5PF/subunit F6, ATP5PB/subunit b, ATP5PD/subunit d, ATP5PO/subunit OSCP. ATP synthase complex consists of a soluble F(1) head domain (subunits alpha(3) and beta(3)) - the catalytic core - and a membrane F(0) domain - the membrane proton channel (subunits c, a, 8, e, f, g, k and j). These two domains are linked by a central stalk (subunits gamma, delta, and epsilon) rotating inside the F1 region and a stationary peripheral stalk (subunits F6, b, d, and OSCP). Interacts with PPIF. Interacts with BCL2L1 isoform BCL-X(L); the interaction mediates the association of BCL2L1 isoform BCL-X(L) with the mitochondrial membrane F(1)F(0) ATP synthase and enhances neurons metabolic efficiency. Interacts with CLN5 and PPT1. Interacts with S100A1; this interaction increases F1-ATPase activity. Interacts with MTLN. Interacts with TTC5/STRAP; the interaction results in decreased mitochondrial ATP production.

It is found in the mitochondrion inner membrane. It carries out the reaction ATP + H2O + 4 H(+)(in) = ADP + phosphate + 5 H(+)(out). Catalytic subunit beta, of the mitochondrial membrane ATP synthase complex (F(1)F(0) ATP synthase or Complex V) that produces ATP from ADP in the presence of a proton gradient across the membrane which is generated by electron transport complexes of the respiratory chain. ATP synthase complex consist of a soluble F(1) head domain - the catalytic core - and a membrane F(1) domain - the membrane proton channel. These two domains are linked by a central stalk rotating inside the F(1) region and a stationary peripheral stalk. During catalysis, ATP synthesis in the catalytic domain of F(1) is coupled via a rotary mechanism of the central stalk subunits to proton translocation. In vivo, can only synthesize ATP although its ATP hydrolase activity can be activated artificially in vitro. With the subunit alpha (ATP5F1A), forms the catalytic core in the F(1) domain. This chain is ATP synthase F(1) complex catalytic subunit beta, mitochondrial, found in Bos taurus (Bovine).